The chain runs to 331 residues: Mycothiol acetyltransferase (331 aa).

1D-myo-inositol 2-(L-cysteinylamino)-2-deoxy-alpha-D-glucopyranoside is bound at residue Glu33. Positions 59–86 (HAAEATAGSAASADPADPADPAAPADPA) are enriched in low complexity. The interval 59–89 (HAAEATAGSAASADPADPADPAAPADPADPA) is disordered. Residue 115-120 (RRGHGS) coordinates acetyl-CoA. Positions 183–331 (LRLDTFEESR…DVQLRATERG (149 aa)) constitute an N-acetyltransferase domain. 1D-myo-inositol 2-(L-cysteinylamino)-2-deoxy-alpha-D-glucopyranoside contacts are provided by Glu210, Lys249, and Glu261. 265 to 267 (VAT) contributes to the acetyl-CoA binding site. Tyr299 contacts 1D-myo-inositol 2-(L-cysteinylamino)-2-deoxy-alpha-D-glucopyranoside. 304-309 (NAPALR) provides a ligand contact to acetyl-CoA.

Belongs to the acetyltransferase family. MshD subfamily. In terms of assembly, monomer.

It catalyses the reaction 1D-myo-inositol 2-(L-cysteinylamino)-2-deoxy-alpha-D-glucopyranoside + acetyl-CoA = mycothiol + CoA + H(+). Catalyzes the transfer of acetyl from acetyl-CoA to desacetylmycothiol (Cys-GlcN-Ins) to form mycothiol. This is Mycothiol acetyltransferase from Brachybacterium faecium (strain ATCC 43885 / DSM 4810 / JCM 11609 / LMG 19847 / NBRC 14762 / NCIMB 9860 / 6-10).